The sequence spans 295 residues: MTDAKLIDGNLFSAKLRETITARVAEMKAAHHITPGLAVVLVGEDPASQVYVRTKGKRTVETGMRSFEHKLPADTPEDALLLLIESLNKDPEVHGILVQLPVPKHIDTQKVIEAIDPAKDVDGFHPVNVGRLAAGGDALVPCTPLGSLLLLKDTLGKLGGLDAVVIGRSNIVGKPMAQLLIKESCTVTVAHSQTKDLPGVVRRADIVIAAVGRPEMIKGDWIKPGATVIDVGINRIELPDGTKKLVGDVDFASAVKVAGAITPVPGGVGPMTIACLLRNTLVACARLHKLPEVEF.

NADP(+)-binding positions include 167-169 (GRS), Ser192, and Ile233.

It belongs to the tetrahydrofolate dehydrogenase/cyclohydrolase family. In terms of assembly, homodimer.

The catalysed reaction is (6R)-5,10-methylene-5,6,7,8-tetrahydrofolate + NADP(+) = (6R)-5,10-methenyltetrahydrofolate + NADPH. The enzyme catalyses (6R)-5,10-methenyltetrahydrofolate + H2O = (6R)-10-formyltetrahydrofolate + H(+). The protein operates within one-carbon metabolism; tetrahydrofolate interconversion. Its function is as follows. Catalyzes the oxidation of 5,10-methylenetetrahydrofolate to 5,10-methenyltetrahydrofolate and then the hydrolysis of 5,10-methenyltetrahydrofolate to 10-formyltetrahydrofolate. This is Bifunctional protein FolD from Paramagnetospirillum magneticum (strain ATCC 700264 / AMB-1) (Magnetospirillum magneticum).